The sequence spans 706 residues: Putative pentatricopeptide repeat-containing protein At3g47840 (706 aa).

PPR repeat units lie at residues 39–69 (VKFDPNSHLRSLINAGNLRAARQVFDKMPHG), 70–104 (DIVSWTSIIKRYVTANNSDEALILFSAMRVVDHAV), 107–141 (DTSVLSVVLKACGQSSNIAYGESLHAYAVKTSLLS), 142–172 (SVYVGSSLLDMYKRVGKIDKSCRVFSEMPFR), 173–203 (NAVTWTAIITGLVHAGRYKEGLTYFSEMSRS), 208–242 (DTYTFAIALKACAGLRQVKYGKAIHTHVIVRGFVT), 243–273 (TLCVANSLATMYTECGEMQDGLCLFENMSER), 274–308 (DVVSWTSLIVAYKRIGQEVKAVETFIKMRNSQVPP), 309–343 (NEQTFASMFSACASLSRLVWGEQLHCNVLSLGLND), 344–374 (SLSVSNSMMKMYSTCGNLVSASVLFQGMRCR), 375–409 (DIISWSTIIGGYCQAGFGEEGFKYFSWMRQSGTKP), 410–444 (TDFALASLLSVSGNMAVIEGGRQVHALALCFGLEQ), 445–475 (NSTVRSSLINMYSKCGSIKEASMIFGETDRD), 476–510 (DIVSLTAMINGYAEHGKSKEAIDLFEKSLKVGFRP), 511–541 (DSVTFISVLTACTHSGQLDLGFHYFNMMQET), and 547–577 (AKEHYGCMVDLLCRAGRLSDAEKMINEMSWK). The interval 582-657 (VWTTLLIACK…EPGWSSIKIK (76 aa)) is type E motif. The tract at residues 658–688 (DCVSAFVSGDRFHPQSEDIYNILELAVSGAE) is type E(+) motif.

It belongs to the PPR family. PCMP-E subfamily.

The protein is Putative pentatricopeptide repeat-containing protein At3g47840 (PCMP-E43) of Arabidopsis thaliana (Mouse-ear cress).